We begin with the raw amino-acid sequence, 258 residues long: MLLVIDVGNTNTVLGVYHDGKLEYHWRIETSRHKTEDEFGMILRSLFDHSGLMFEQIDGIIISSVVPPIMFALERMCTKYFHIEPQIVGPGMKTGLNIKYDNPKEVGADRIVNAVAAIHLYGNPLIVVDFGTATTYCYIDENKQYMGGAIAPGITISTEALYSRAAKLPRIEITRPDNIIGKNTVSAMQSGILFGYVGQVEGIVKRMKWQAKQEPKVIATGGLAPLIANESDCIDIVDPFLTLKGLELIYERNRVGSV.

An ATP-binding site is contributed by 6–13; that stretch reads DVGNTNTV. Substrate is bound by residues Y100 and 107–110; that span reads GADR. D109 (proton acceptor) is an active-site residue. D129 lines the K(+) pocket. Residue T132 coordinates ATP. T184 provides a ligand contact to substrate.

The protein belongs to the type III pantothenate kinase family. In terms of assembly, homodimer. Requires NH4(+) as cofactor. It depends on K(+) as a cofactor.

It is found in the cytoplasm. It carries out the reaction (R)-pantothenate + ATP = (R)-4'-phosphopantothenate + ADP + H(+). It functions in the pathway cofactor biosynthesis; coenzyme A biosynthesis; CoA from (R)-pantothenate: step 1/5. Not regulated by feedback inhibition by CoA and its thioesters as described for many other pantothenate kinases. Not inhibited by N-pentylpantothenamide (N5-Pan), and this compound cannot act as a substrate either. In terms of biological role, catalyzes the phosphorylation of pantothenate (Pan), the first step in CoA biosynthesis. Cannot utilize a phosphoryl donor other than ATP. In Bacillus subtilis (strain 168), this protein is Type III pantothenate kinase (coaX).